Reading from the N-terminus, the 421-residue chain is Serine--tRNA ligase (421 aa).

Position 230–232 (230–232 (TAE)) interacts with L-serine. Residue 259–261 (RRE) coordinates ATP. Residue Glu-282 participates in L-serine binding. ATP is bound at residue 346–349 (EISS). L-serine is bound at residue Ser-381.

It belongs to the class-II aminoacyl-tRNA synthetase family. Type-1 seryl-tRNA synthetase subfamily. As to quaternary structure, homodimer. The tRNA molecule binds across the dimer.

It localises to the cytoplasm. It carries out the reaction tRNA(Ser) + L-serine + ATP = L-seryl-tRNA(Ser) + AMP + diphosphate + H(+). The enzyme catalyses tRNA(Sec) + L-serine + ATP = L-seryl-tRNA(Sec) + AMP + diphosphate + H(+). It participates in aminoacyl-tRNA biosynthesis; selenocysteinyl-tRNA(Sec) biosynthesis; L-seryl-tRNA(Sec) from L-serine and tRNA(Sec): step 1/1. In terms of biological role, catalyzes the attachment of serine to tRNA(Ser). Is also able to aminoacylate tRNA(Sec) with serine, to form the misacylated tRNA L-seryl-tRNA(Sec), which will be further converted into selenocysteinyl-tRNA(Sec). The sequence is that of Serine--tRNA ligase from Acidithiobacillus ferrooxidans (strain ATCC 23270 / DSM 14882 / CIP 104768 / NCIMB 8455) (Ferrobacillus ferrooxidans (strain ATCC 23270)).